Here is an 828-residue protein sequence, read N- to C-terminus: Periplasmic nitrate reductase (828 aa).

Residues 1-31 (MKLSRRSFMKANAVAAAAAAAGLSVPGVARA) constitute a signal peptide (tat-type signal). The region spanning 39–95 (IKWDKAPCRFCGTGCGVLVGTQQGRVVACQGDPDAPVNRGLNCIKGYFLPKIMYGKD) is the 4Fe-4S Mo/W bis-MGD-type domain. [4Fe-4S] cluster contacts are provided by Cys-46, Cys-49, Cys-53, and Cys-81. Residues Lys-83, Gln-150, Asn-175, Cys-179, 212–219 (WGANMAEM), 243–247 (STYQH), 262–264 (QSD), Met-372, Gln-376, Asn-482, 508–509 (SD), Lys-531, Asp-558, and 718–727 (TGRVLEHWHT) each bind Mo-bis(molybdopterin guanine dinucleotide). Phe-794 serves as a coordination point for substrate. Mo-bis(molybdopterin guanine dinucleotide) is bound by residues Asn-802 and Lys-819.

The protein belongs to the prokaryotic molybdopterin-containing oxidoreductase family. NasA/NapA/NarB subfamily. In terms of assembly, component of the periplasmic nitrate reductase NapAB complex composed of NapA and NapB. It depends on [4Fe-4S] cluster as a cofactor. Mo-bis(molybdopterin guanine dinucleotide) is required as a cofactor. Post-translationally, predicted to be exported by the Tat system. The position of the signal peptide cleavage has not been experimentally proven.

The protein localises to the periplasm. The catalysed reaction is 2 Fe(II)-[cytochrome] + nitrate + 2 H(+) = 2 Fe(III)-[cytochrome] + nitrite + H2O. Its function is as follows. Catalytic subunit of the periplasmic nitrate reductase complex NapAB. Receives electrons from NapB and catalyzes the reduction of nitrate to nitrite. The chain is Periplasmic nitrate reductase from Escherichia coli O7:K1 (strain IAI39 / ExPEC).